The chain runs to 75 residues: Translational regulator CsrA (75 aa).

Belongs to the CsrA/RsmA family. Homodimer; the beta-strands of each monomer intercalate to form a hydrophobic core, while the alpha-helices form wings that extend away from the core.

It localises to the cytoplasm. In terms of biological role, a translational regulator that binds mRNA to regulate translation initiation and/or mRNA stability. Usually binds in the 5'-UTR at or near the Shine-Dalgarno sequence preventing ribosome-binding, thus repressing translation. Its main target seems to be the major flagellin gene, while its function is anatagonized by FliW. This Acetivibrio thermocellus (strain ATCC 27405 / DSM 1237 / JCM 9322 / NBRC 103400 / NCIMB 10682 / NRRL B-4536 / VPI 7372) (Clostridium thermocellum) protein is Translational regulator CsrA.